Here is a 92-residue protein sequence, read N- to C-terminus: MTRSLKKGPFVDHHLVAKADKAVATKDKKPIKTWSRRSMVLPDFIGLTIAVHNGKQHVPVYITDQMVGHKLGEFALTRTFKGHPADKKVQKK.

The protein belongs to the universal ribosomal protein uS19 family.

Functionally, protein S19 forms a complex with S13 that binds strongly to the 16S ribosomal RNA. The protein is Small ribosomal subunit protein uS19 of Albidiferax ferrireducens (strain ATCC BAA-621 / DSM 15236 / T118) (Rhodoferax ferrireducens).